Here is a 326-residue protein sequence, read N- to C-terminus: Sulfate/thiosulfate import ATP-binding protein CysA (326 aa).

The 235-residue stretch at 3 to 237 (IEVRNVSKNF…PSNDFVYHFL (235 aa)) folds into the ABC transporter domain. 35 to 42 (GPSGCGKT) lines the ATP pocket.

It belongs to the ABC transporter superfamily. Sulfate/tungstate importer (TC 3.A.1.6) family. As to quaternary structure, the complex is composed of two ATP-binding proteins (CysA), two transmembrane proteins (CysT and CysW) and a solute-binding protein (CysP).

It localises to the cell inner membrane. It carries out the reaction sulfate(out) + ATP + H2O = sulfate(in) + ADP + phosphate + H(+). It catalyses the reaction thiosulfate(out) + ATP + H2O = thiosulfate(in) + ADP + phosphate + H(+). Part of the ABC transporter complex CysAWTP involved in sulfate/thiosulfate import. Responsible for energy coupling to the transport system. This is Sulfate/thiosulfate import ATP-binding protein CysA from Pseudomonas syringae pv. tomato (strain ATCC BAA-871 / DC3000).